The primary structure comprises 282 residues: Probable aquaporin PIP2-6 (282 aa).

The next 2 membrane-spanning stretches (helical) occupy residues 39–59 and 76–96; these read ALIA…ATVI and LGIA…TAGI. The short motif at 102 to 104 is the NPA 1 element; the sequence is NPA. 3 helical membrane-spanning segments follow: residues 121–141, 163–183, and 197–217; these read VMYI…VKGI, GTAL…VFSA, and VLAP…TIPI. The NPA 2 motif lies at 223–225; it reads NPA. Residues 245–265 form a helical membrane-spanning segment; the sequence is IFWAGPFIGALAAAAYHQYIL.

The protein belongs to the MIP/aquaporin (TC 1.A.8) family. PIP (TC 1.A.8.11) subfamily. Expressed in roots and leaves.

Its subcellular location is the cell membrane. Functionally, aquaporins facilitate the transport of water and small neutral solutes across cell membranes. The chain is Probable aquaporin PIP2-6 (PIP2-6) from Oryza sativa subsp. japonica (Rice).